Reading from the N-terminus, the 206-residue chain is Histidine biosynthesis bifunctional protein HisIE (206 aa).

The interval 1–117 (MGSNEVATGD…SCFPSAPGQF (117 aa)) is phosphoribosyl-AMP cyclohydrolase. Residues 118–206 (LGSLDALVAE…AAALLESRHQ (89 aa)) form a phosphoribosyl-ATP pyrophosphohydrolase region.

This sequence in the N-terminal section; belongs to the PRA-CH family. In the C-terminal section; belongs to the PRA-PH family.

The protein resides in the cytoplasm. The catalysed reaction is 1-(5-phospho-beta-D-ribosyl)-ATP + H2O = 1-(5-phospho-beta-D-ribosyl)-5'-AMP + diphosphate + H(+). It catalyses the reaction 1-(5-phospho-beta-D-ribosyl)-5'-AMP + H2O = 1-(5-phospho-beta-D-ribosyl)-5-[(5-phospho-beta-D-ribosylamino)methylideneamino]imidazole-4-carboxamide. It functions in the pathway amino-acid biosynthesis; L-histidine biosynthesis; L-histidine from 5-phospho-alpha-D-ribose 1-diphosphate: step 2/9. Its pathway is amino-acid biosynthesis; L-histidine biosynthesis; L-histidine from 5-phospho-alpha-D-ribose 1-diphosphate: step 3/9. This is Histidine biosynthesis bifunctional protein HisIE from Xanthomonas axonopodis pv. citri (strain 306).